The sequence spans 126 residues: Small ribosomal subunit protein uS12 (126 aa).

D89 bears the 3-methylthioaspartic acid mark.

The protein belongs to the universal ribosomal protein uS12 family. Part of the 30S ribosomal subunit. Contacts proteins S8 and S17. May interact with IF1 in the 30S initiation complex.

Its function is as follows. With S4 and S5 plays an important role in translational accuracy. Interacts with and stabilizes bases of the 16S rRNA that are involved in tRNA selection in the A site and with the mRNA backbone. Located at the interface of the 30S and 50S subunits, it traverses the body of the 30S subunit contacting proteins on the other side and probably holding the rRNA structure together. The combined cluster of proteins S8, S12 and S17 appears to hold together the shoulder and platform of the 30S subunit. This chain is Small ribosomal subunit protein uS12, found in Carboxydothermus hydrogenoformans (strain ATCC BAA-161 / DSM 6008 / Z-2901).